We begin with the raw amino-acid sequence, 215 residues long: Large ribosomal subunit protein uL3 (215 aa).

The residue at position 156 (Gln-156) is an N5-methylglutamine.

Belongs to the universal ribosomal protein uL3 family. Part of the 50S ribosomal subunit. Forms a cluster with proteins L14 and L19. In terms of processing, methylated by PrmB.

Functionally, one of the primary rRNA binding proteins, it binds directly near the 3'-end of the 23S rRNA, where it nucleates assembly of the 50S subunit. The sequence is that of Large ribosomal subunit protein uL3 from Xylella fastidiosa (strain M23).